A 354-amino-acid polypeptide reads, in one-letter code: Methylthioribose-1-phosphate isomerase (354 aa).

Substrate contacts are provided by residues 58–60, arginine 101, and glutamine 204; that span reads RGA. Aspartate 245 functions as the Proton donor in the catalytic mechanism. 255 to 256 lines the substrate pocket; the sequence is NK.

It belongs to the eIF-2B alpha/beta/delta subunits family. MtnA subfamily.

The catalysed reaction is 5-(methylsulfanyl)-alpha-D-ribose 1-phosphate = 5-(methylsulfanyl)-D-ribulose 1-phosphate. It functions in the pathway amino-acid biosynthesis; L-methionine biosynthesis via salvage pathway; L-methionine from S-methyl-5-thio-alpha-D-ribose 1-phosphate: step 1/6. Its function is as follows. Catalyzes the interconversion of methylthioribose-1-phosphate (MTR-1-P) into methylthioribulose-1-phosphate (MTRu-1-P). The polypeptide is Methylthioribose-1-phosphate isomerase (Xylella fastidiosa (strain M23)).